Reading from the N-terminus, the 304-residue chain is tRNA pseudouridine synthase B (304 aa).

The active-site Nucleophile is the aspartate 41.

Belongs to the pseudouridine synthase TruB family. Type 1 subfamily.

The catalysed reaction is uridine(55) in tRNA = pseudouridine(55) in tRNA. Responsible for synthesis of pseudouridine from uracil-55 in the psi GC loop of transfer RNAs. The polypeptide is tRNA pseudouridine synthase B (Nitratidesulfovibrio vulgaris (strain ATCC 29579 / DSM 644 / CCUG 34227 / NCIMB 8303 / VKM B-1760 / Hildenborough) (Desulfovibrio vulgaris)).